A 131-amino-acid polypeptide reads, in one-letter code: Putative gamma-taxilin 2 (131 aa).

This sequence belongs to the taxilin family.

This is Putative gamma-taxilin 2 (TXLNGY) from Pan troglodytes (Chimpanzee).